The primary structure comprises 168 residues: UPF0262 protein BBta_0898 (168 aa).

Belongs to the UPF0262 family.

In Bradyrhizobium sp. (strain BTAi1 / ATCC BAA-1182), this protein is UPF0262 protein BBta_0898.